We begin with the raw amino-acid sequence, 87 residues long: Protein anon-73B1 (87 aa).

A helical membrane pass occupies residues 25 to 47; that stretch reads LLIRYGLYVGALFQFVCISAAVL. Residues 50 to 87 are disordered; it reads NNPDSQSNPETGEVTEREGEPVRTRLHKIRKLEKKKRR. A compositionally biased stretch (basic and acidic residues) spans 63–72; that stretch reads VTEREGEPVR. The segment covering 73–87 has biased composition (basic residues); it reads TRLHKIRKLEKKKRR.

The protein belongs to the UPF0239 family.

The protein localises to the membrane. The chain is Protein anon-73B1 (anon-73B1) from Drosophila simulans (Fruit fly).